Here is a 282-residue protein sequence, read N- to C-terminus: Elongation factor Ts (282 aa).

The tract at residues Thr80–Val83 is involved in Mg(2+) ion dislocation from EF-Tu.

The protein belongs to the EF-Ts family.

Its subcellular location is the cytoplasm. In terms of biological role, associates with the EF-Tu.GDP complex and induces the exchange of GDP to GTP. It remains bound to the aminoacyl-tRNA.EF-Tu.GTP complex up to the GTP hydrolysis stage on the ribosome. The protein is Elongation factor Ts of Chlamydia trachomatis serovar A (strain ATCC VR-571B / DSM 19440 / HAR-13).